The primary structure comprises 591 residues: Mono(ADP-ribosyl)transferase SpvB (591 aa).

Residues 373-576 (PMMGGNSSRP…LRLSDDATAD (204 aa)) form the TR mART core domain. NAD(+)-binding positions include Arg414 and 471 to 477 (RGLKLDK). Catalysis depends on residues Arg471, Ser501, and Glu538. Glu538 contributes to the NAD(+) binding site.

Belongs to the SpvB family.

Its subcellular location is the secreted. The enzyme catalyses L-arginyl-[protein] + NAD(+) = N(omega)-(ADP-D-ribosyl)-L-arginyl-[protein] + nicotinamide + H(+). With respect to regulation, inhibited by novobiocin. Mono-ADP-ribosylates eukaryotic muscle and non-muscle actin on 'Arg-177'. ADP-ribosylates all actins tested, has more activity on nonmuscle beta/gamma-actin than on muscle alpha-actin. Prefers monomeric G-actin but can weakly ADP-ribosylate F-actin. ADP-ribosylation prevents the polymerization of G-actin to F-actin, causing actin filament depolymerization, destruction of the cytoskeleton and cytotoxicity. Does not possess NAD(+)-glycohydrolase activity, unlike most mART enzymes. The polypeptide is Mono(ADP-ribosyl)transferase SpvB (spvB) (Salmonella typhimurium).